An 88-amino-acid chain; its full sequence is UPF0250 protein Sama_2593 (88 aa).

The protein belongs to the UPF0250 family.

The chain is UPF0250 protein Sama_2593 from Shewanella amazonensis (strain ATCC BAA-1098 / SB2B).